Consider the following 345-residue polypeptide: MSKPNTETISVNIPESEGVPLPDEQSVAERSIVNQSPNNSTVVTVNSEGDVSKIITRIKNHLASFNYAASLDFNKDKDHDKVLTVGEYKISRECLLHYLSGNPDFLKSSAGECSKAIQTFSNESGNLDLESLLTLSPNKDFIHDTNFYKNLYGFNVSIADFIANNNEFKKANYNTQIRILQNYHEFLKQSIEYFNKYMNQYKVIDDNLISRSYNLMYLLNVLTFRRANVGRNINELLDSYNKLNQAIATNLAIYDSINKSKLEIAPEARSSIIDKGVQDLVNSLKQRTNILKKQGETLKKNVEDINKDTSNLKRHATGDIIGIADSLRKEVDSVATSFVSTEKKK.

Residues 1 to 13 are compositionally biased toward polar residues; the sequence is MSKPNTETISVNI. The disordered stretch occupies residues 1–23; sequence MSKPNTETISVNIPESEGVPLPD. Residues 283 to 316 are a coiled coil; the sequence is SLKQRTNILKKQGETLKKNVEDINKDTSNLKRHA.

Its subcellular location is the virion. This is an uncharacterized protein from Acanthamoeba polyphaga mimivirus (APMV).